A 75-amino-acid chain; its full sequence is RNA-binding protein KhpA (75 aa).

Positions 29–75 constitute a KH domain; that stretch reads SIILELKVSPEDMGKVIGKQGRIAKAIRTVVKAAAIKENKKVVVEII.

The protein belongs to the KhpA RNA-binding protein family. In terms of assembly, forms a complex with KhpB.

The protein localises to the cytoplasm. A probable RNA chaperone. Forms a complex with KhpB which binds to cellular RNA and controls its expression. Plays a role in peptidoglycan (PG) homeostasis and cell length regulation. The sequence is that of RNA-binding protein KhpA from Clostridium perfringens (strain 13 / Type A).